We begin with the raw amino-acid sequence, 75 residues long: Protein Tlp homolog (75 aa).

The protein belongs to the Tlp family.

This chain is Protein Tlp homolog, found in Clostridium acetobutylicum (strain ATCC 824 / DSM 792 / JCM 1419 / IAM 19013 / LMG 5710 / NBRC 13948 / NRRL B-527 / VKM B-1787 / 2291 / W).